Here is a 77-residue protein sequence, read N- to C-terminus: DNA-directed RNA polymerase subunit Rpo5 (77 aa).

Belongs to the archaeal Rpo5/eukaryotic RPB5 RNA polymerase subunit family. In terms of assembly, part of the RNA polymerase complex.

The protein resides in the cytoplasm. The catalysed reaction is RNA(n) + a ribonucleoside 5'-triphosphate = RNA(n+1) + diphosphate. In terms of biological role, DNA-dependent RNA polymerase (RNAP) catalyzes the transcription of DNA into RNA using the four ribonucleoside triphosphates as substrates. The polypeptide is DNA-directed RNA polymerase subunit Rpo5 (Methanosphaera stadtmanae (strain ATCC 43021 / DSM 3091 / JCM 11832 / MCB-3)).